Here is a 668-residue protein sequence, read N- to C-terminus: Endoplasmic reticulum membrane-associated RNA degradation protein (668 aa).

Transmembrane regions (helical) follow at residues 378 to 398 (LLAF…LSVF) and 575 to 595 (VLSL…AVCG).

The protein localises to the endoplasmic reticulum membrane. May play a role in neuronal migration during embryonic development. The sequence is that of Endoplasmic reticulum membrane-associated RNA degradation protein (ERMARD) from Macaca fascicularis (Crab-eating macaque).